A 301-amino-acid chain; its full sequence is Glycine--tRNA ligase alpha subunit (301 aa).

This sequence belongs to the class-II aminoacyl-tRNA synthetase family. As to quaternary structure, tetramer of two alpha and two beta subunits.

The protein resides in the cytoplasm. It carries out the reaction tRNA(Gly) + glycine + ATP = glycyl-tRNA(Gly) + AMP + diphosphate. The chain is Glycine--tRNA ligase alpha subunit from Shewanella oneidensis (strain ATCC 700550 / JCM 31522 / CIP 106686 / LMG 19005 / NCIMB 14063 / MR-1).